The following is a 471-amino-acid chain: MTTLTEVLDYKVADLSLAEWGRKEIDVAEKEMPGLMATRRKYAGQYPLKGARIAGSLHMTIQTAVLIETLVELGAEVRWASCNIFSTQDHAAAAIAKSGVPVFAWKGETLEEYWWCTRQILEFEGGKGPNLIVDDGGDATLMIILGYKIENNPELLEKAPANLEEKALYQQFREVFAEDSQRWHKVAAEMKGVSEETTTGVHRLYQMMEKGELLFPAINVNDSVTKSKFDNLYGCRESLADGIKRATDVMVAGKVVVVLGYGDVGKGSARSMRAYGARVIVTEIDPICALQAAMEGYEVSTMDEAVKEGNIFVTTTGNKDVITLEHMKQMKDEAIVCNIGHFDNEIQVEQLYAYAGATRLNIKPQVDKYTFENGNCIYLLAEGRLVNLGCATGHPSFVMSNSFTNQTLAQIELWTKDYAVGVYRLPKELDEEVARLHLEQLGVKLTRLSDEQAAYIGVPLDGPYKPEHYRY.

Residues Thr-60, Asp-135, and Glu-196 each coordinate substrate. Residue 197–199 (TTT) coordinates NAD(+). Residues Lys-226 and Asp-230 each coordinate substrate. NAD(+) contacts are provided by residues Asn-231, 260–265 (GYGDVG), Glu-283, Asn-318, 339–341 (IGH), and Asn-387.

Belongs to the adenosylhomocysteinase family. NAD(+) is required as a cofactor.

The protein resides in the cytoplasm. The enzyme catalyses S-adenosyl-L-homocysteine + H2O = L-homocysteine + adenosine. The protein operates within amino-acid biosynthesis; L-homocysteine biosynthesis; L-homocysteine from S-adenosyl-L-homocysteine: step 1/1. Functionally, may play a key role in the regulation of the intracellular concentration of adenosylhomocysteine. This chain is Adenosylhomocysteinase, found in Pelodictyon phaeoclathratiforme (strain DSM 5477 / BU-1).